The following is a 136-amino-acid chain: Large-conductance mechanosensitive channel (136 aa).

A run of 2 helical transmembrane segments spans residues 10-30 (FAMR…AAFG) and 76-96 (GSFI…FSAV).

This sequence belongs to the MscL family. As to quaternary structure, homopentamer.

Its subcellular location is the cell inner membrane. In terms of biological role, channel that opens in response to stretch forces in the membrane lipid bilayer. May participate in the regulation of osmotic pressure changes within the cell. This Yersinia enterocolitica serotype O:8 / biotype 1B (strain NCTC 13174 / 8081) protein is Large-conductance mechanosensitive channel.